A 292-amino-acid polypeptide reads, in one-letter code: Ribosome-inactivating protein saporin-2 (292 aa).

The first 24 residues, 1-24, serve as a signal peptide directing secretion; that stretch reads MKIYVVATIAWILLQFSAWTTTDA. Glutamate 200 is an active-site residue.

It belongs to the ribosome-inactivating protein family. Type 1 RIP subfamily.

The catalysed reaction is Endohydrolysis of the N-glycosidic bond at one specific adenosine on the 28S rRNA.. In terms of biological role, ribosome-inactivating protein of type 1, inhibits protein synthesis in animal cells. Useful as immunotoxin for pharmacological applications. The protein is Ribosome-inactivating protein saporin-2 (SAP2) of Saponaria officinalis (Common soapwort).